The chain runs to 315 residues: Ribosomal RNA small subunit methyltransferase H (315 aa).

S-adenosyl-L-methionine is bound by residues 37-39, D57, F83, D105, and Q112; that span reads GGH.

Belongs to the methyltransferase superfamily. RsmH family.

The protein localises to the cytoplasm. The catalysed reaction is cytidine(1402) in 16S rRNA + S-adenosyl-L-methionine = N(4)-methylcytidine(1402) in 16S rRNA + S-adenosyl-L-homocysteine + H(+). Functionally, specifically methylates the N4 position of cytidine in position 1402 (C1402) of 16S rRNA. The sequence is that of Ribosomal RNA small subunit methyltransferase H from Pseudomonas fluorescens (strain SBW25).